We begin with the raw amino-acid sequence, 124 residues long: Ribonuclease pancreatic (124 aa).

Positions 1-13 (KESAAAKFERQHM) are enriched in basic and acidic residues. The disordered stretch occupies residues 1–24 (KESAAAKFERQHMDSSTSSASSSN). Substrate-binding residues include Lys7 and Arg10. His12 functions as the Proton acceptor in the catalytic mechanism. Cystine bridges form between Cys26-Cys84, Cys40-Cys95, Cys58-Cys110, and Cys65-Cys72. A glycan (N-linked (GlcNAc...) asparagine; partial) is linked at Asn34. Substrate contacts are provided by residues 41–45 (KPVNT), Lys66, and Arg85. The Proton donor role is filled by His119.

This sequence belongs to the pancreatic ribonuclease family. Monomer. Interacts with and forms tight 1:1 complexes with RNH1. Dimerization of two such complexes may occur. Interaction with RNH1 inhibits this protein. As to expression, pancreas.

It is found in the secreted. The enzyme catalyses an [RNA] containing cytidine + H2O = an [RNA]-3'-cytidine-3'-phosphate + a 5'-hydroxy-ribonucleotide-3'-[RNA].. It catalyses the reaction an [RNA] containing uridine + H2O = an [RNA]-3'-uridine-3'-phosphate + a 5'-hydroxy-ribonucleotide-3'-[RNA].. Its function is as follows. Endonuclease that catalyzes the cleavage of RNA on the 3' side of pyrimidine nucleotides. Acts on single-stranded and double-stranded RNA. The polypeptide is Ribonuclease pancreatic (RNASE1) (Ovis aries (Sheep)).